The following is a 303-amino-acid chain: Probable 5-dehydro-4-deoxyglucarate dehydratase (303 aa).

This sequence belongs to the DapA family.

It carries out the reaction 5-dehydro-4-deoxy-D-glucarate + H(+) = 2,5-dioxopentanoate + CO2 + H2O. Its pathway is carbohydrate acid metabolism; D-glucarate degradation; 2,5-dioxopentanoate from D-glucarate: step 2/2. The protein is Probable 5-dehydro-4-deoxyglucarate dehydratase of Paracidovorax citrulli (strain AAC00-1) (Acidovorax citrulli).